A 244-amino-acid chain; its full sequence is tRNA pseudouridine synthase A (244 aa).

Asp52 functions as the Nucleophile in the catalytic mechanism. Position 110 (Tyr110) interacts with substrate.

This sequence belongs to the tRNA pseudouridine synthase TruA family. Homodimer.

The enzyme catalyses uridine(38/39/40) in tRNA = pseudouridine(38/39/40) in tRNA. In terms of biological role, formation of pseudouridine at positions 38, 39 and 40 in the anticodon stem and loop of transfer RNAs. The protein is tRNA pseudouridine synthase A of Clostridium acetobutylicum (strain ATCC 824 / DSM 792 / JCM 1419 / IAM 19013 / LMG 5710 / NBRC 13948 / NRRL B-527 / VKM B-1787 / 2291 / W).